The primary structure comprises 447 residues: Gamma-glutamyl phosphate reductase (447 aa).

This sequence belongs to the gamma-glutamyl phosphate reductase family.

It is found in the cytoplasm. It carries out the reaction L-glutamate 5-semialdehyde + phosphate + NADP(+) = L-glutamyl 5-phosphate + NADPH + H(+). It participates in amino-acid biosynthesis; L-proline biosynthesis; L-glutamate 5-semialdehyde from L-glutamate: step 2/2. Functionally, catalyzes the NADPH-dependent reduction of L-glutamate 5-phosphate into L-glutamate 5-semialdehyde and phosphate. The product spontaneously undergoes cyclization to form 1-pyrroline-5-carboxylate. This is Gamma-glutamyl phosphate reductase from Methanosarcina acetivorans (strain ATCC 35395 / DSM 2834 / JCM 12185 / C2A).